The sequence spans 152 residues: UPF0266 membrane protein YobD (152 aa).

Helical transmembrane passes span 6–26 (LVLILFIAALLAFAIYDQFIM), 45–65 (IDSVIFVGLIVILIYNNVTNH), and 67–87 (ALITTWLLSALALMGFYIFWI).

This sequence belongs to the UPF0266 family.

Its subcellular location is the cell inner membrane. The polypeptide is UPF0266 membrane protein YobD (Shigella dysenteriae serotype 1 (strain Sd197)).